The following is a 524-amino-acid chain: Glucose-6-phosphate isomerase (524 aa).

The active-site Proton donor is the Glu-346. Residues His-377 and Lys-492 contribute to the active site.

The protein belongs to the GPI family.

It localises to the cytoplasm. It catalyses the reaction alpha-D-glucose 6-phosphate = beta-D-fructose 6-phosphate. The protein operates within carbohydrate biosynthesis; gluconeogenesis. It functions in the pathway carbohydrate degradation; glycolysis; D-glyceraldehyde 3-phosphate and glycerone phosphate from D-glucose: step 2/4. Catalyzes the reversible isomerization of glucose-6-phosphate to fructose-6-phosphate. The chain is Glucose-6-phosphate isomerase from Chlamydia trachomatis serovar A (strain ATCC VR-571B / DSM 19440 / HAR-13).